We begin with the raw amino-acid sequence, 369 residues long: Tyrosyl-DNA phosphodiesterase 2 (369 aa).

Basic and acidic residues predominate over residues 1-17 (MELEARAEPRSPRAGRG). 2 disordered regions span residues 1-26 (MELEARAEPRSPRAGRGEEEEDEDEE) and 80-117 (AAAAGGGSAGPGSCIDLTADDTASNTSSSGADSKQQDD). A compositionally biased stretch (low complexity) spans 99–112 (DDTASNTSSSGADS). Positions 127 to 131 (NIDGL) are interaction with 5' end of substrate DNA. Mg(2+) contacts are provided by Asp-129 and Glu-159. Residues 233-238 (HLESTR) form an interaction with 5' end of substrate DNA region. Asp-269 acts as the Proton donor/acceptor in catalysis. The interaction with 5' end of substrate DNA stretch occupies residues 271–273 (NLR).

Belongs to the CCR4/nocturin family. TTRAP/TDP2 subfamily. The cofactor is Mg(2+). Mn(2+) serves as cofactor.

The protein localises to the nucleus. Its subcellular location is the PML body. Its function is as follows. DNA repair enzyme that can remove a variety of covalent adducts from DNA through hydrolysis of a 5'-phosphodiester bond, giving rise to DNA with a free 5' phosphate. Catalyzes the hydrolysis of dead-end complexes between DNA and the topoisomerase 2 (TOP2) active site tyrosine residue. Hydrolyzes 5'-phosphoglycolates on protruding 5' ends on DNA double-strand breaks (DSBs) due to DNA damage by radiation and free radicals. The 5'-tyrosyl DNA phosphodiesterase activity can enable the repair of TOP2-induced DSBs without the need for nuclease activity, creating a 'clean' DSB with 5'-phosphate termini that are ready for ligation. Also has 3'-tyrosyl DNA phosphodiesterase activity, but less efficiently and much slower than TDP1. In Gallus gallus (Chicken), this protein is Tyrosyl-DNA phosphodiesterase 2 (TDP2).